The chain runs to 131 residues: Translation initiation factor 5A (131 aa).

Lys-37 carries the post-translational modification Hypusine.

This sequence belongs to the eIF-5A family.

It localises to the cytoplasm. In terms of biological role, functions by promoting the formation of the first peptide bond. The polypeptide is Translation initiation factor 5A (eIF5A) (Methanococcus maripaludis (strain C5 / ATCC BAA-1333)).